A 356-amino-acid polypeptide reads, in one-letter code: Heat-inducible transcription repressor HrcA (356 aa).

This sequence belongs to the HrcA family.

Functionally, negative regulator of class I heat shock genes (grpE-dnaK-dnaJ and groELS operons). Prevents heat-shock induction of these operons. The polypeptide is Heat-inducible transcription repressor HrcA (Gluconobacter oxydans (strain 621H) (Gluconobacter suboxydans)).